A 212-amino-acid polypeptide reads, in one-letter code: 2-C-methyl-D-erythritol 4-phosphate cytidylyltransferase (212 aa).

Belongs to the IspD/TarI cytidylyltransferase family. IspD subfamily.

It carries out the reaction 2-C-methyl-D-erythritol 4-phosphate + CTP + H(+) = 4-CDP-2-C-methyl-D-erythritol + diphosphate. It functions in the pathway isoprenoid biosynthesis; isopentenyl diphosphate biosynthesis via DXP pathway; isopentenyl diphosphate from 1-deoxy-D-xylulose 5-phosphate: step 2/6. In terms of biological role, catalyzes the formation of 4-diphosphocytidyl-2-C-methyl-D-erythritol from CTP and 2-C-methyl-D-erythritol 4-phosphate (MEP). The chain is 2-C-methyl-D-erythritol 4-phosphate cytidylyltransferase from Chlamydia caviae (strain ATCC VR-813 / DSM 19441 / 03DC25 / GPIC) (Chlamydophila caviae).